The chain runs to 93 residues: Large ribosomal subunit protein uL23cz/uL23cy (93 aa).

The protein belongs to the universal ribosomal protein uL23 family. As to quaternary structure, part of the 50S ribosomal subunit.

The protein localises to the plastid. The protein resides in the chloroplast. Its function is as follows. Binds to 23S rRNA. In Citrus sinensis (Sweet orange), this protein is Large ribosomal subunit protein uL23cz/uL23cy (rpl23-A).